Here is a 185-residue protein sequence, read N- to C-terminus: Elongation factor P (185 aa).

This sequence belongs to the elongation factor P family.

It localises to the cytoplasm. It functions in the pathway protein biosynthesis; polypeptide chain elongation. Functionally, involved in peptide bond synthesis. Stimulates efficient translation and peptide-bond synthesis on native or reconstituted 70S ribosomes in vitro. Probably functions indirectly by altering the affinity of the ribosome for aminoacyl-tRNA, thus increasing their reactivity as acceptors for peptidyl transferase. The sequence is that of Elongation factor P from Clostridium botulinum (strain Alaska E43 / Type E3).